A 71-amino-acid polypeptide reads, in one-letter code: Permeability factor 2 (71 aa).

2 disulfide bridges follow: Cys-7–Cys-33 and Cys-9–Cys-49.

This sequence belongs to the intercrine alpha (chemokine CxC) family. As to quaternary structure, homodimer.

It localises to the secreted. Its function is as follows. Has chemotactic activity for neutrophils. In Oryctolagus cuniculus (Rabbit), this protein is Permeability factor 2.